Reading from the N-terminus, the 834-residue chain is Periplasmic nitrate reductase (834 aa).

Positions M1–A29 form a signal peptide, tat-type signal. One can recognise a 4Fe-4S Mo/W bis-MGD-type domain in the interval L41–D97. Residues C48, C51, C55, and C83 each coordinate [4Fe-4S] cluster. Mo-bis(molybdopterin guanine dinucleotide) contacts are provided by residues K85, Q152, N177, C181, W214–M221, S245–H249, Q264–D266, M375, Q379, N485, S511–D512, K534, D561, and T721–T730. Residue F797 participates in substrate binding. Mo-bis(molybdopterin guanine dinucleotide) is bound by residues N805 and K822.

Belongs to the prokaryotic molybdopterin-containing oxidoreductase family. NasA/NapA/NarB subfamily. In terms of assembly, component of the periplasmic nitrate reductase NapAB complex composed of NapA and NapB. It depends on [4Fe-4S] cluster as a cofactor. Mo-bis(molybdopterin guanine dinucleotide) is required as a cofactor. Predicted to be exported by the Tat system. The position of the signal peptide cleavage has not been experimentally proven.

The protein localises to the periplasm. The catalysed reaction is 2 Fe(II)-[cytochrome] + nitrate + 2 H(+) = 2 Fe(III)-[cytochrome] + nitrite + H2O. Its function is as follows. Catalytic subunit of the periplasmic nitrate reductase complex NapAB. Receives electrons from NapB and catalyzes the reduction of nitrate to nitrite. This is Periplasmic nitrate reductase from Pseudomonas paraeruginosa (strain DSM 24068 / PA7) (Pseudomonas aeruginosa (strain PA7)).